Here is a 122-residue protein sequence, read N- to C-terminus: Large ribosomal subunit protein uL14c (122 aa).

This sequence belongs to the universal ribosomal protein uL14 family. Part of the 50S ribosomal subunit.

The protein localises to the plastid. The protein resides in the chloroplast. Functionally, binds to 23S rRNA. This is Large ribosomal subunit protein uL14c from Cryptomeria japonica (Japanese cedar).